A 147-amino-acid chain; its full sequence is Hemoglobin subunit deltaH (147 aa).

One can recognise a Globin domain in the interval 3-147 (RLTDSEKAEV…MANALAHKYH (145 aa)). Heme b contacts are provided by His64 and His93.

It belongs to the globin family. In terms of assembly, heterotetramer of two delta chains and two alpha chains. In terms of tissue distribution, red blood cells.

The polypeptide is Hemoglobin subunit deltaH (Heterohyrax brucei (Yellow-spotted hyrax)).